The following is a 288-amino-acid chain: 4-diphosphocytidyl-2-C-methyl-D-erythritol kinase (288 aa).

Lys-12 is a catalytic residue. ATP is bound at residue 95-105 (PAGGGVGGGSS). Asp-137 is a catalytic residue.

It belongs to the GHMP kinase family. IspE subfamily.

The enzyme catalyses 4-CDP-2-C-methyl-D-erythritol + ATP = 4-CDP-2-C-methyl-D-erythritol 2-phosphate + ADP + H(+). It participates in isoprenoid biosynthesis; isopentenyl diphosphate biosynthesis via DXP pathway; isopentenyl diphosphate from 1-deoxy-D-xylulose 5-phosphate: step 3/6. In terms of biological role, catalyzes the phosphorylation of the position 2 hydroxy group of 4-diphosphocytidyl-2C-methyl-D-erythritol. The sequence is that of 4-diphosphocytidyl-2-C-methyl-D-erythritol kinase from Halorhodospira halophila (strain DSM 244 / SL1) (Ectothiorhodospira halophila (strain DSM 244 / SL1)).